Reading from the N-terminus, the 423-residue chain is 26S proteasome regulatory subunit 6B homolog (423 aa).

207–214 (GPPGTGKT) is an ATP binding site.

Belongs to the AAA ATPase family.

Its subcellular location is the cytoplasm. It is found in the nucleus. Its function is as follows. The 26S proteasome is involved in the ATP-dependent degradation of ubiquitinated proteins. The regulatory (or ATPase) complex confers ATP dependency and substrate specificity to the 26S complex. This Aspergillus niger protein is 26S proteasome regulatory subunit 6B homolog (tbpA).